The following is a 505-amino-acid chain: Cyclin-dependent kinase C-1 (505 aa).

In terms of domain architecture, Protein kinase spans 26–325 (FEKLEQIGEG…AKDALDAEYF (300 aa)). Residues 32 to 40 (IGEGTYGQV) and lysine 55 contribute to the ATP site. The residue at position 37 (tyrosine 37) is a Phosphotyrosine. The active-site Proton acceptor is aspartate 164. Threonine 198 is modified (phosphothreonine). The segment at 336 to 505 (SLPTYESSHE…QRNQQYGWQQ (170 aa)) is disordered. A compositionally biased stretch (low complexity) spans 429–456 (PPSGNQSGGYNQSRGGYSSGSYPPQGRG). The span at 482-491 (GQYGGSGSSG) shows a compositional bias: gly residues. Positions 492 to 505 (RGQNQRNQQYGWQQ) are enriched in low complexity.

This sequence belongs to the protein kinase superfamily. CMGC Ser/Thr protein kinase family. CDC2/CDKX subfamily. As to quaternary structure, interacts with CYCT1-3. Highly expressed in flowers. Expressed in seedlings, roots, rosettes and stems.

It catalyses the reaction L-seryl-[protein] + ATP = O-phospho-L-seryl-[protein] + ADP + H(+). It carries out the reaction L-threonyl-[protein] + ATP = O-phospho-L-threonyl-[protein] + ADP + H(+). The catalysed reaction is [DNA-directed RNA polymerase] + ATP = phospho-[DNA-directed RNA polymerase] + ADP + H(+). This chain is Cyclin-dependent kinase C-1 (CDKC-1), found in Arabidopsis thaliana (Mouse-ear cress).